The following is a 515-amino-acid chain: 2,3-bisphosphoglycerate-independent phosphoglycerate mutase (515 aa).

Positions 14 and 63 each coordinate Mn(2+). The active site involves S63. Substrate contacts are provided by residues H124, 154 to 155 (RD), R186, R192, 259 to 262 (RADR), and K334. Residues D401, H405, D442, H443, and H460 each contribute to the Mn(2+) site.

This sequence belongs to the BPG-independent phosphoglycerate mutase family. Mg(2+) serves as cofactor. The cofactor is Mn(2+).

The catalysed reaction is (2R)-2-phosphoglycerate = (2R)-3-phosphoglycerate. The protein operates within carbohydrate degradation; glycolysis; pyruvate from D-glyceraldehyde 3-phosphate: step 3/5. With respect to regulation, activity is not affected by 2,3-bisphosphoglycerate. In terms of biological role, catalyzes the interconversion of 2-phosphoglycerate and 3-phosphoglycerate. The polypeptide is 2,3-bisphosphoglycerate-independent phosphoglycerate mutase (Brugia malayi (Filarial nematode worm)).